The chain runs to 1230 residues: Ubiquitin carboxyl-terminal hydrolase 15 (1230 aa).

Residues 39–179 (EDSFTWNIPD…EGTLNITAYV (141 aa)) form the MATH domain. Positions 205 to 536 (VGFRNQGATC…SAYMLVYIRQ (332 aa)) constitute a USP domain. The Nucleophile role is filled by cysteine 214. Histidine 465 functions as the Proton acceptor in the catalytic mechanism.

This sequence belongs to the peptidase C19 family. Interacts with PEX6; promoting association with the PEX1-PEX6 ATPase complex.

The protein localises to the cytoplasm. It localises to the cytosol. The protein resides in the peroxisome. It carries out the reaction Thiol-dependent hydrolysis of ester, thioester, amide, peptide and isopeptide bonds formed by the C-terminal Gly of ubiquitin (a 76-residue protein attached to proteins as an intracellular targeting signal).. Functionally, deubiquitinase involved in peroxisome import by mediating deubiquitination of the peroxisomal import receptor PEX5. Catalyzes deubiquitination of both monoubiquitiated and polyubiquitinated forms of PEX5 following its retrotranslocation into the cytosol, resetting PEX5 for a subsequent import cycle. This Saccharomyces cerevisiae (strain ATCC 204508 / S288c) (Baker's yeast) protein is Ubiquitin carboxyl-terminal hydrolase 15.